The following is a 189-amino-acid chain: Peptidyl-tRNA hydrolase (189 aa).

TRNA is bound at residue Y16. H21 (proton acceptor) is an active-site residue. TRNA is bound by residues F67, N69, and N115.

This sequence belongs to the PTH family. As to quaternary structure, monomer.

The protein localises to the cytoplasm. It catalyses the reaction an N-acyl-L-alpha-aminoacyl-tRNA + H2O = an N-acyl-L-amino acid + a tRNA + H(+). In terms of biological role, hydrolyzes ribosome-free peptidyl-tRNAs (with 1 or more amino acids incorporated), which drop off the ribosome during protein synthesis, or as a result of ribosome stalling. Catalyzes the release of premature peptidyl moieties from peptidyl-tRNA molecules trapped in stalled 50S ribosomal subunits, and thus maintains levels of free tRNAs and 50S ribosomes. The protein is Peptidyl-tRNA hydrolase of Legionella pneumophila subsp. pneumophila (strain Philadelphia 1 / ATCC 33152 / DSM 7513).